Reading from the N-terminus, the 132-residue chain is Small ribosomal subunit protein uS8 (132 aa).

Belongs to the universal ribosomal protein uS8 family. In terms of assembly, part of the 30S ribosomal subunit. Contacts proteins S5 and S12.

Functionally, one of the primary rRNA binding proteins, it binds directly to 16S rRNA central domain where it helps coordinate assembly of the platform of the 30S subunit. The protein is Small ribosomal subunit protein uS8 of Natranaerobius thermophilus (strain ATCC BAA-1301 / DSM 18059 / JW/NM-WN-LF).